Reading from the N-terminus, the 104-residue chain is Large ribosomal subunit protein uL24 (104 aa).

The protein belongs to the universal ribosomal protein uL24 family. As to quaternary structure, part of the 50S ribosomal subunit.

In terms of biological role, one of two assembly initiator proteins, it binds directly to the 5'-end of the 23S rRNA, where it nucleates assembly of the 50S subunit. Its function is as follows. One of the proteins that surrounds the polypeptide exit tunnel on the outside of the subunit. In Caulobacter vibrioides (strain ATCC 19089 / CIP 103742 / CB 15) (Caulobacter crescentus), this protein is Large ribosomal subunit protein uL24.